A 438-amino-acid chain; its full sequence is Cytochrome P450 monooxygenase claJ (438 aa).

Position 378 (cysteine 378) interacts with heme.

It belongs to the cytochrome P450 family. It depends on heme as a cofactor.

Its pathway is secondary metabolite biosynthesis. In terms of biological role, cytochrome P450 monooxygenase; part of the cla gene cluster that produces clavatol and ortho-quinone methide. The clavatol biosynthesis cluster cla and the terrestric acid cluster tra are both involved in the production of peniphenones and penilactones. The non-reducing PKS claF is responsible for the formation of clavatol from successive condensations of 3 malonyl-CoA units, presumably with a simple acetyl-CoA starter unit, and 2 methylation steps. The esterase claE probably collaborates with claF by catalyzing the hydrolysis of ACP-bound acyl intermediates to free the ACP from stalled intermediates. The clavatol oxidase claD then converts clavatol to hydroxyclavatol. Spontaneous dehydration of hydroxyclavatol leads to the accumulation of the highly active ortho-quinone methide. On the other hand, the PKS-NRPS hybrid traA is involved in the formation of crustosic acid, with the help of traB and traD. The polyketide synthase module (PKS) of traA is responsible for the synthesis of the polyketide backbone via the condensation of an acetyl-CoA starter unit with 3 malonyl-CoA units. The downstream nonribosomal peptide synthetase (NRPS) module then amidates the carboxyl end of the polyketide with L-malic acid. Because traA lacks a designated enoylreductase (ER) domain, the required activity is provided the enoyl reductase traG. Crustosic acid undergoes decarboxylation and isomerization to the terrestric acid, catalyzed by the 2-oxoglutarate-dependent dioxygenase traH. Both acids are further converted to the 2 gamma-butyrolactones (R)-5-methyltetronic acid and (S)-5-carboxylmethyltetronic acid, with involvement of the cytochrome P450 monooxygenase claJ. Spontaneous addition of the methide to these gamma-butyrolactones leads to peniphenone D and penilactone D, which undergo again stereospecific attacking by methide to give penilactones A and B. The sequence is that of Cytochrome P450 monooxygenase claJ from Penicillium crustosum (Blue mold fungus).